Here is a 227-residue protein sequence, read N- to C-terminus: Orotate phosphoribosyltransferase 2 (227 aa).

41–42 (FF) provides a ligand contact to orotate. 5-phospho-alpha-D-ribose 1-diphosphate contacts are provided by residues 79–80 (YK), arginine 109, lysine 110, lysine 113, histidine 115, and 135–143 (DDVMTAGTA). 2 residues coordinate orotate: threonine 139 and arginine 167.

This sequence belongs to the purine/pyrimidine phosphoribosyltransferase family. PyrE subfamily. In terms of assembly, homodimer.

It catalyses the reaction orotidine 5'-phosphate + diphosphate = orotate + 5-phospho-alpha-D-ribose 1-diphosphate. It functions in the pathway pyrimidine metabolism; UMP biosynthesis via de novo pathway; UMP from orotate: step 1/2. Its function is as follows. Catalyzes the transfer of a ribosyl phosphate group from 5-phosphoribose 1-diphosphate to orotate, leading to the formation of orotidine monophosphate (OMP). The polypeptide is Orotate phosphoribosyltransferase 2 (URA10) (Saccharomyces cerevisiae (strain ATCC 204508 / S288c) (Baker's yeast)).